The chain runs to 1066 residues: Kinesin-like protein Klp61F (1066 aa).

Positions 19–356 (NIQVYVRVRP…LEYAHRAKNI (338 aa)) constitute a Kinesin motor domain. 103–110 (GQTGTGKT) contributes to the ATP binding site. Residues 362–462 (VNQKLTKKTV…KTEENLLNTK (101 aa)) adopt a coiled-coil conformation. Threonine 520 carries the phosphothreonine modification. Coiled-coil stretches lie at residues 540–569 (DRMQ…QLSQ), 639–738 (LMSK…QIKN), 808–875 (CSML…LITE), and 889–918 (DLVQ…ELVR). Threonine 933 is subject to Phosphothreonine. Position 949 is a phosphoserine (serine 949). Residues 990-1002 (ELSETETIMNSTP) are compositionally biased toward polar residues. Disordered regions lie at residues 990-1009 (ELSE…VDGV) and 1016-1066 (GTTR…ENVA). The segment covering 1033–1051 (GGKRSSSLSRSLTPSKTSP) has biased composition (low complexity). A Phosphoserine modification is found at serine 1043. Threonine 1045 is subject to Phosphothreonine. Residues serine 1050 and serine 1054 each carry the phosphoserine modification.

The protein belongs to the TRAFAC class myosin-kinesin ATPase superfamily. Kinesin family. BimC subfamily. Homotetramer. Consists of two pairs of polypeptides associated by coiled-coil interactions to form two homodimers. The homodimers are linked by lateral interactions between their coiled-coil regions to form a bipolar homotetramer consisting of a central rod with two motor domains projecting from either end. Parallel coiled coils extend from each pair of motor heads, switch to two antiparallel coiled coils in the central region and then back to parallel coiled coils. Interacts with Wee1. In terms of processing, phosphorylation is required for localization to mitotic spindles. Phosphorylation of Thr-933 during mitosis controls association with the spindle apparatus. Phosphorylated in vitro by Wee1.

It is found in the cytoplasm. It localises to the cytoskeleton. Its subcellular location is the spindle. The protein resides in the spindle pole. Important role in mitotic dividing cells. Microtubule motor required for spindle body separation. Slow plus-end directed microtubule motor capable of cross-linking and sliding apart antiparallel microtubules, thereby pushing apart the associated spindle poles during spindle assembly and function. Forms cross-links between microtubules within interpolar microtubule bundles. Contributes to the length of the metaphase spindle, maintains the prometaphase spindle by antagonizing Ncd, drives anaphase B, and also contributes to normal chromosome congression, kinetochore spacing, and anaphase A rates. Displays microtubule-stimulated ATPase activity. Required for normal fusome organization. Required in non-mitotic cells for transport of secretory proteins from the Golgi complex to the cell surface. The chain is Kinesin-like protein Klp61F from Drosophila melanogaster (Fruit fly).